We begin with the raw amino-acid sequence, 71 residues long: Small ribosomal subunit protein bS21 (71 aa).

The protein belongs to the bacterial ribosomal protein bS21 family.

The sequence is that of Small ribosomal subunit protein bS21 from Shewanella woodyi (strain ATCC 51908 / MS32).